The primary structure comprises 1250 residues: Bifunctional autolysin (1250 aa).

An N-terminal signal peptide occupies residues 1–29; sequence MAKKFNYKLPSMVALTLVGSAVTAHQVQA. Residues 103–138 are compositionally biased toward polar residues; sequence GDTRANQSATTNNTQPVAKSTSTTAPKTNTNVTNAG. Disordered stretches follow at residues 103 to 151 and 173 to 219; these read GDTR…NSEN and AAAP…KYKP. Low complexity predominate over residues 173–196; the sequence is AAAPKAATTSAPKAKTEATPKVTT. The interval 199–769 is N-acetylmuramoyl-L-alanine amidase; sequence ASAQPRSVAA…AVAQPKTAVK (571 aa). 7 consecutive GW domains span residues 437–511, 513–587, 606–680, 682–756, 778–853, 855–930, and 937–1011; these read TVAA…YNTA, SPVN…DTAK, TVSS…YNNA, SPVN…VPAA, TTQT…VQNL, KEVK…APTA, and AAKD…KELI. Residues 770–1250 are endo-beta-N-acetylglucosaminidase; sequence AYTVTKPQTT…GKYFDIPQYK (481 aa).

This sequence in the N-terminal section; belongs to the N-acetylmuramoyl-L-alanine amidase 2 family. The protein in the C-terminal section; belongs to the glycosyl hydrolase 73 family. In terms of assembly, oligomer; forms a ring structure at the cell surface which is important for efficient partitioning of daughter cells after cell division. Post-translationally, undergoes proteolytic processing to generate the two extracellular lytic enzymes, probably at the septal region on the cell surface.

The protein localises to the secreted. It carries out the reaction Hydrolyzes the link between N-acetylmuramoyl residues and L-amino acid residues in certain cell-wall glycopeptides.. The catalysed reaction is an N(4)-(oligosaccharide-(1-&gt;3)-[oligosaccharide-(1-&gt;6)]-beta-D-Man-(1-&gt;4)-beta-D-GlcNAc-(1-&gt;4)-alpha-D-GlcNAc)-L-asparaginyl-[protein] + H2O = an oligosaccharide-(1-&gt;3)-[oligosaccharide-(1-&gt;6)]-beta-D-Man-(1-&gt;4)-D-GlcNAc + N(4)-(N-acetyl-beta-D-glucosaminyl)-L-asparaginyl-[protein]. Functionally, endohydrolysis of the di-N-acetylchitobiosyl unit in high-mannose glycopeptides and glycoproteins containing the -[(Man)5(GlcNAc)2]-Asn structure. One N-acetyl-D-glucosamine residue remains attached to the protein; the rest of the oligosaccharide is released intact. Cleaves the peptidoglycan connecting the daughter cells at the end of the cell division cycle, resulting in the separation of the two newly divided cells. Acts as an autolysin in penicillin-induced lysis. The sequence is that of Bifunctional autolysin (atl) from Staphylococcus aureus (strain MSSA476).